Consider the following 468-residue polypeptide: UDP-N-acetylmuramate--L-alanine ligase (468 aa).

116-122 (GTHGKTT) contacts ATP.

Belongs to the MurCDEF family.

The protein localises to the cytoplasm. The catalysed reaction is UDP-N-acetyl-alpha-D-muramate + L-alanine + ATP = UDP-N-acetyl-alpha-D-muramoyl-L-alanine + ADP + phosphate + H(+). Its pathway is cell wall biogenesis; peptidoglycan biosynthesis. Cell wall formation. The polypeptide is UDP-N-acetylmuramate--L-alanine ligase (Fusobacterium nucleatum subsp. nucleatum (strain ATCC 25586 / DSM 15643 / BCRC 10681 / CIP 101130 / JCM 8532 / KCTC 2640 / LMG 13131 / VPI 4355)).